Here is a 541-residue protein sequence, read N- to C-terminus: Membrane protein insertase YidC (541 aa).

Residues 7–27 (ILLLALALVSFLLFQQWQVET) form a helical membrane-spanning segment. Residues 34 to 55 (TVSTVQQTHKNGDVPTSSTANS) are compositionally biased toward polar residues. A disordered region spans residues 34-59 (TVSTVQQTHKNGDVPTSSTANSDAPV). 4 helical membrane passes run 343-363 (SFIQ…TFIV), 418-438 (LGGC…YWAL), 456-476 (LSAQ…MFLI), and 495-515 (FIPV…VLYW).

This sequence belongs to the OXA1/ALB3/YidC family. Type 1 subfamily. In terms of assembly, interacts with the Sec translocase complex via SecD. Specifically interacts with transmembrane segments of nascent integral membrane proteins during membrane integration.

The protein localises to the cell inner membrane. In terms of biological role, required for the insertion and/or proper folding and/or complex formation of integral membrane proteins into the membrane. Involved in integration of membrane proteins that insert both dependently and independently of the Sec translocase complex, as well as at least some lipoproteins. Aids folding of multispanning membrane proteins. The protein is Membrane protein insertase YidC of Aliivibrio salmonicida (strain LFI1238) (Vibrio salmonicida (strain LFI1238)).